Reading from the N-terminus, the 341-residue chain is HTH-type transcriptional repressor PurR (341 aa).

One can recognise an HTH lacI-type domain in the interval 2–56 (ATIKDVAKHAGVSTTTVSHVINKTRFVAENTKAAVWAAIKELHYSPSAVARSLKV). Positions 4-23 (IKDVAKHAGVSTTTVSHVIN) form a DNA-binding region, H-T-H motif. Residues 48-56 (SAVARSLKV) mediate DNA binding. Hypoxanthine contacts are provided by Tyr-73, Arg-190, Thr-192, and Asp-275.

Homodimer.

It participates in purine metabolism; purine nucleotide biosynthesis [regulation]. In terms of biological role, is the main repressor of the genes involved in the de novo synthesis of purine nucleotides, regulating purB, purC, purEK, purF, purHD, purL, purMN and guaBA expression. PurR is allosterically activated to bind its cognate DNA by binding the purine corepressors, hypoxanthine or guanine, thereby effecting transcription repression. This Yersinia pestis bv. Antiqua (strain Antiqua) protein is HTH-type transcriptional repressor PurR.